We begin with the raw amino-acid sequence, 380 residues long: SAM and SH3 domain-containing protein 3 (380 aa).

Disordered stretches follow at residues 1-76 (MLRR…GKKW) and 96-168 (LSEE…SPAP). A compositionally biased stretch (low complexity) spans 22–41 (LQRSSSFKDFAKSKPSSPVV). 3 positions are modified to phosphoserine: Ser27, Ser34, and Ser42. Residue Thr61 is modified to Phosphothreonine. Position 97 is a phosphoserine (Ser97). At Thr103 the chain carries Phosphothreonine. At Ser110 the chain carries Phosphoserine. Thr112 bears the Phosphothreonine mark. Ser113 and Ser120 each carry phosphoserine. The span at 141 to 150 (LSRQTSTGSE) shows a compositional bias: polar residues. An SH3 domain is found at 173–234 (PFCGRARVHT…KFIYVDVLPE (62 aa)). Residues 252-316 (PKPKTLHELL…LTAAELLLDY (65 aa)) enclose the SAM domain. Thr318 carries the phosphothreonine modification. A compositionally biased stretch (acidic residues) spans 318 to 327 (TGSEEAEEGA). Residues 318–380 (TGSEEAEEGA…LQGLSLSGAP (63 aa)) are disordered. Position 320 is a phosphoserine (Ser320). The segment covering 369 to 380 (EQLQGLSLSGAP) has biased composition (polar residues).

Preferentially expressed in lymphoid tissues. Expressed in bone marrow, thymus, spleen, lymph nodes and Peyer patches of gut. In the spleen and lymph nodes, expressed in both T- and B-cells. In the thymus, in the medulla and cortex.

Its function is as follows. May function as a signaling adapter protein in lymphocytes. In Mus musculus (Mouse), this protein is SAM and SH3 domain-containing protein 3 (Sash3).